Consider the following 270-residue polypeptide: Undecaprenyl-diphosphatase (270 aa).

8 helical membrane-spanning segments follow: residues 14–34, 40–60, 88–108, 117–137, 146–166, 189–209, 221–241, and 249–269; these read GLTE…PTFL, GITF…LYFW, FYII…ETTI, SLIA…DTSG, ITLK…IPGV, FSFL…LSGL, PLLI…AFLL, and LYPF…FINF.

Belongs to the UppP family.

The protein resides in the cell inner membrane. The enzyme catalyses di-trans,octa-cis-undecaprenyl diphosphate + H2O = di-trans,octa-cis-undecaprenyl phosphate + phosphate + H(+). In terms of biological role, catalyzes the dephosphorylation of undecaprenyl diphosphate (UPP). Confers resistance to bacitracin. The chain is Undecaprenyl-diphosphatase from Geotalea daltonii (strain DSM 22248 / JCM 15807 / FRC-32) (Geobacter daltonii).